A 180-amino-acid chain; its full sequence is Large ribosomal subunit protein uL5 (180 aa).

This sequence belongs to the universal ribosomal protein uL5 family. Part of the 50S ribosomal subunit; part of the 5S rRNA/L5/L18/L25 subcomplex. Contacts the 5S rRNA and the P site tRNA. Forms a bridge to the 30S subunit in the 70S ribosome.

This is one of the proteins that bind and probably mediate the attachment of the 5S RNA into the large ribosomal subunit, where it forms part of the central protuberance. In the 70S ribosome it contacts protein S13 of the 30S subunit (bridge B1b), connecting the 2 subunits; this bridge is implicated in subunit movement. Contacts the P site tRNA; the 5S rRNA and some of its associated proteins might help stabilize positioning of ribosome-bound tRNAs. This Lactiplantibacillus plantarum (strain ATCC BAA-793 / NCIMB 8826 / WCFS1) (Lactobacillus plantarum) protein is Large ribosomal subunit protein uL5.